The chain runs to 190 residues: Xanthine phosphoribosyltransferase (190 aa).

2 residues coordinate xanthine: Leu20 and Asn27. Residue 129 to 133 (ANGAA) participates in 5-phospho-alpha-D-ribose 1-diphosphate binding. A xanthine-binding site is contributed by Lys157.

Belongs to the purine/pyrimidine phosphoribosyltransferase family. Xpt subfamily. As to quaternary structure, homodimer.

It is found in the cytoplasm. The enzyme catalyses XMP + diphosphate = xanthine + 5-phospho-alpha-D-ribose 1-diphosphate. It functions in the pathway purine metabolism; XMP biosynthesis via salvage pathway; XMP from xanthine: step 1/1. Converts the preformed base xanthine, a product of nucleic acid breakdown, to xanthosine 5'-monophosphate (XMP), so it can be reused for RNA or DNA synthesis. The polypeptide is Xanthine phosphoribosyltransferase (Laribacter hongkongensis (strain HLHK9)).